The sequence spans 213 residues: Chloramphenicol acetyltransferase 2 (213 aa).

The active-site Proton acceptor is His189.

The protein belongs to the chloramphenicol acetyltransferase family. As to quaternary structure, homotrimer.

It catalyses the reaction chloramphenicol + acetyl-CoA = chloramphenicol 3-acetate + CoA. Its function is as follows. This enzyme is an effector of chloramphenicol resistance in bacteria. This Haemophilus influenzae protein is Chloramphenicol acetyltransferase 2 (cat-IIH).